We begin with the raw amino-acid sequence, 89 residues long: Small ribosomal subunit protein uS15 (89 aa).

This sequence belongs to the universal ribosomal protein uS15 family. Part of the 30S ribosomal subunit. Forms a bridge to the 50S subunit in the 70S ribosome, contacting the 23S rRNA.

In terms of biological role, one of the primary rRNA binding proteins, it binds directly to 16S rRNA where it helps nucleate assembly of the platform of the 30S subunit by binding and bridging several RNA helices of the 16S rRNA. Its function is as follows. Forms an intersubunit bridge (bridge B4) with the 23S rRNA of the 50S subunit in the ribosome. This Enterobacter sp. (strain 638) protein is Small ribosomal subunit protein uS15.